A 53-amino-acid polypeptide reads, in one-letter code: MRDIIKLTCGNCGRANYHTTKNKRTMTDKFVIKKFCPTERKHTEHKEGKISKG.

The protein belongs to the bacterial ribosomal protein bL33 family.

The chain is Large ribosomal subunit protein bL33B from Sorangium cellulosum (strain So ce56) (Polyangium cellulosum (strain So ce56)).